The following is a 227-amino-acid chain: Glutathione S-transferase U18 (227 aa).

The GST N-terminal domain maps to 4–83; it reads EDVKLIGSWA…YIDEAWNSSG (80 aa). Residues 14 to 15, 40 to 41, 54 to 55, and 67 to 68 contribute to the glutathione site; these read SV, SK, KM, and ES. The GST C-terminal domain occupies 90–221; sequence HPYDRAIARF…TKLAEFARKL (132 aa).

Belongs to the GST superfamily. Tau family.

It localises to the cytoplasm. The protein resides in the cytosol. The enzyme catalyses RX + glutathione = an S-substituted glutathione + a halide anion + H(+). In terms of biological role, may be involved in the conjugation of reduced glutathione to a wide number of exogenous and endogenous hydrophobic electrophiles and have a detoxification role against certain herbicides. The polypeptide is Glutathione S-transferase U18 (GSTU18) (Arabidopsis thaliana (Mouse-ear cress)).